Reading from the N-terminus, the 180-residue chain is MDLSRIPPQPKAGILNVLIEIPAGSKNKYEFDKDLNAFALDRVLYSSVQYPYDYGFVPITNNLADDGDPLDGMVIMVPPTFPGVATARPIGMLQMVDGGDRDEKFLCVPAKDPRYTYVKSANDLAGHRLDEIFEFFRSYKNLFKKPTEFFGWKGDVAGLPLVEECVKNYYKTYCKNDHGK.

Substrate is bound by residues Lys-28, Arg-42, and Tyr-54. Mg(2+) contacts are provided by Asp-66, Asp-71, and Asp-102. Residue Tyr-139 participates in substrate binding.

The protein belongs to the PPase family. As to quaternary structure, homohexamer. It depends on Mg(2+) as a cofactor.

The protein resides in the cytoplasm. It carries out the reaction diphosphate + H2O = 2 phosphate + H(+). Hydrolyzes PPi generated in anabolic reactions. Its function is as follows. Catalyzes the hydrolysis of inorganic pyrophosphate (PPi) forming two phosphate ions. In Pseudanabaena sp. (strain PCC 6903), this protein is Inorganic pyrophosphatase.